A 75-amino-acid polypeptide reads, in one-letter code: Conotoxin Vn5.6 (75 aa).

The N-terminal stretch at M1–P19 is a signal peptide. Residues N20–K59 constitute a propeptide that is removed on maturation. A Pyrrolidone carboxylic acid modification is found at Q60.

Belongs to the conotoxin T superfamily. In terms of processing, contains 2 disulfide bonds that can be either 'C1-C3, C2-C4' or 'C1-C4, C2-C3', since these disulfide connectivities have been observed for conotoxins with cysteine framework V (for examples, see AC P0DQQ7 and AC P81755). In terms of tissue distribution, expressed by the venom duct.

It localises to the secreted. This Conus ventricosus (Mediterranean cone) protein is Conotoxin Vn5.6.